A 186-amino-acid polypeptide reads, in one-letter code: MISSNDFRTGTTIELDGQVWRVVEFLHVKPGKGSAFVRTKLKSVQSGNVVEKTFRAGESVQQAILEKSNLQHTYVESGDYVFMDMSSFEETRLTSEQIGRGAKYLKEGMEVNVIFHNGKVLEVELPISITLKVTETDPGVKGDTASGGTKPAILETGAQVMVPLFISVGEMIKVDTRNDSYLGREN.

Belongs to the elongation factor P family.

It localises to the cytoplasm. The protein operates within protein biosynthesis; polypeptide chain elongation. Involved in peptide bond synthesis. Stimulates efficient translation and peptide-bond synthesis on native or reconstituted 70S ribosomes in vitro. Probably functions indirectly by altering the affinity of the ribosome for aminoacyl-tRNA, thus increasing their reactivity as acceptors for peptidyl transferase. The protein is Elongation factor P of Prochlorococcus marinus (strain MIT 9215).